A 64-amino-acid polypeptide reads, in one-letter code: Large ribosomal subunit protein bL35 (64 aa).

Positions 1–28 are enriched in basic residues; sequence MSKAKTHSGAAKRFKKTASGYKHKHAFK. A disordered region spans residues 1–51; sequence MSKAKTHSGAAKRFKKTASGYKHKHAFKSHILTKMTTKRKRQLRGTSLLNA.

This sequence belongs to the bacterial ribosomal protein bL35 family.

The polypeptide is Large ribosomal subunit protein bL35 (Saccharophagus degradans (strain 2-40 / ATCC 43961 / DSM 17024)).